The sequence spans 373 residues: 4-hydroxy-3-methylbut-2-en-1-yl diphosphate synthase (flavodoxin) (373 aa).

4 residues coordinate [4Fe-4S] cluster: Cys-270, Cys-273, Cys-305, and Glu-312.

This sequence belongs to the IspG family. It depends on [4Fe-4S] cluster as a cofactor.

It carries out the reaction (2E)-4-hydroxy-3-methylbut-2-enyl diphosphate + oxidized [flavodoxin] + H2O + 2 H(+) = 2-C-methyl-D-erythritol 2,4-cyclic diphosphate + reduced [flavodoxin]. It functions in the pathway isoprenoid biosynthesis; isopentenyl diphosphate biosynthesis via DXP pathway; isopentenyl diphosphate from 1-deoxy-D-xylulose 5-phosphate: step 5/6. Converts 2C-methyl-D-erythritol 2,4-cyclodiphosphate (ME-2,4cPP) into 1-hydroxy-2-methyl-2-(E)-butenyl 4-diphosphate. In Photobacterium profundum (strain SS9), this protein is 4-hydroxy-3-methylbut-2-en-1-yl diphosphate synthase (flavodoxin).